The following is a 188-amino-acid chain: PRA1 family protein 3 (188 aa).

Met1 is subject to N-acetylmethionine. Residues 1–35 lie on the Cytoplasmic side of the membrane; the sequence is MDVNIAPLRAWDDFFPGSDRFARPDFRDISKWNNR. The next 2 membrane-spanning stretches (helical) occupy residues 36-56 and 57-77; these read VVSN…MMIS and VVGF…VLVF. The Cytoplasmic portion of the chain corresponds to 78–93; that stretch reads TGFVWAAHNKDILRRM. Transmembrane regions (helical) follow at residues 94–114 and 115–135; these read KKQY…FLIS and LFGG…LMFI. Residues 103–117 are required for homodimer formation and heterodimer formation with ARL6IP1; sequence MVVMLASYFLISLFG. The Cytoplasmic segment spans residues 136–188; that stretch reads HASLRLRNLKNKLENKMEEIGLKRTPMGIVLDALEQQEETITKFSDYISKMKE. Residues 136–188 form a targeting to endoplasmic reticulum membrane region; sequence HASLRLRNLKNKLENKMEEIGLKRTPMGIVLDALEQQEETITKFSDYISKMKE.

The protein belongs to the PRA1 family. In terms of assembly, homodimer. Heterodimer with ARL6IP1. Forms multimers. Interacts with ARL6. Interacts with prenylated RAB1A and RAB3A. Interacts with SLC1A1/EAAC1. Interacts with RTN2 (via first transmembrane domain). Does not interact with VAMP1, VAMP2 or VAMP3.

The protein resides in the endoplasmic reticulum membrane. Its subcellular location is the cell membrane. The protein localises to the cytoplasm. It is found in the cytoskeleton. In terms of biological role, regulates intracellular concentrations of taurine and glutamate. Negatively modulates SLC1A1/EAAC1 glutamate transport activity by decreasing its affinity for glutamate in a PKC activity-dependent manner. Plays a role in the retention of SLC1A1/EAAC1 in the endoplasmic reticulum. The protein is PRA1 family protein 3 (ARL6IP5) of Bos taurus (Bovine).